The primary structure comprises 434 residues: MESPSFSKPVQSATVIVGTQFGDEGKGKLVDYLSDKYDIVVRYQGGANAGHTICFDNKTIVLHLLPSGIFHEGCVCVIGNGVVIDPAALLDEIRKVEELGYEVKGRLFISHNAHLIMPYHKRLDSLHEDAQGDQKIGTTGRGIGPSYEDKFARKGIRVVDLLNPEVLQEKLRDNLAAKNKLLKTIYEKEEFDIDAMVKEYAEFDKIIDPYVTNTQLYLNRQLKAGKTVLLEGAQGCLLDVDHGTYPYVTSSNPTSGGACTGSGIAPNYIGKVIGICKAYMTRVGNGAFPSELSDETGERLGQIGHEFGATTGRKRRCGWIDLVALRYSLAVNGVTEIALTKLDVLDTFEEISVCTSYMLDGKEIQDFPTDHQTLSRVTPVFKTMKGWKATNADARTFDEMRPEARNYVTFLEEELQVPVTFISVGPGRDETVFR.

GTP is bound by residues 22–28 (GDEGKGK) and 50–52 (GHT). The Proton acceptor role is filled by Asp-23. The Mg(2+) site is built by Asp-23 and Gly-50. IMP is bound by residues 23–26 (DEGK), 48–51 (NAGH), Thr-139, Arg-153, Gln-234, Thr-249, and Arg-313. His-51 functions as the Proton donor in the catalytic mechanism. 309–315 (ATTGRKR) is a substrate binding site. GTP contacts are provided by residues Arg-315, 341-343 (KLD), and 423-425 (SVG).

Belongs to the adenylosuccinate synthetase family. In terms of assembly, homodimer. The cofactor is Mg(2+).

The protein resides in the cytoplasm. The catalysed reaction is IMP + L-aspartate + GTP = N(6)-(1,2-dicarboxyethyl)-AMP + GDP + phosphate + 2 H(+). Its pathway is purine metabolism; AMP biosynthesis via de novo pathway; AMP from IMP: step 1/2. In terms of biological role, plays an important role in the de novo pathway of purine nucleotide biosynthesis. Catalyzes the first committed step in the biosynthesis of AMP from IMP. This is Adenylosuccinate synthetase from Chlorobium phaeobacteroides (strain DSM 266 / SMG 266 / 2430).